Reading from the N-terminus, the 238-residue chain is MQAPKHHRRLFAVLATLNTATAVIAGCSSGSNLSSGPLPDATTWVKQATDITKNVTSAHLVLSVNGKITGLPVKTLTGDLTTHPNTVASGNATITLDGADLNANFVVVDGELYATLTPSKWSDFGKASDIYDVASILNPDAGLANVLANFTGAKTEGRDSINGQSAVRISGNVSADAVNKIAPPFNATQPMPATVWIQETGDHQLAQIRIDNKSSGNSVQMTLSNWDEPVQVTKPQVS.

Residues 1 to 26 form the signal peptide; it reads MQAPKHHRRLFAVLATLNTATAVIAG. Cys27 carries the N-palmitoyl cysteine lipid modification. Cys27 is lipidated: S-diacylglycerol cysteine.

Belongs to the LppX/LprAFG lipoprotein family. Modified by Lgt on Cys-27 with an S-linked diacylglyceral, signal peptide is removed by LspA, Cys-27 is further modifed with a fatty acid on its amino group by Lnt yielding a triacylated protein. Probably glycosylated, which is required for T-cell activation.

It localises to the cell inner membrane. Its subcellular location is the secreted. The protein resides in the cell wall. Its function is as follows. Helps membrane protein ML0556 (P55) transport triacylglycerides (TAG) across the inner cell membrane into the periplasm and probably ultimately to the outer membrane. Binds TAG in its hydrophobic cavity and transfers it between lipid bilayers. TAG probably regulates lipid metabolism and growth regulation and plays a structural role in the outer membrane. Binds di- and triacylated phosphatidyl-myo-inositol mannosides (PIMs), and glycolipid lipoglycan modulins lipoarabinomannan (LAM) and lipomannan (LM), facilitating their recognition by TLR2. Required for activity of drug efflux transporter ML0556. Required, probably with ML0556, for normal surface localization of LAM. Constitutes a host TLR2 agonist (toll-like receptor) able to stimulate proliferation of CD4+ T-cells derived from a human leprosy patient following protein processing/presentation by MHC class II molecules in peripheral blood mononuclear cells. The protein is Lipoarabinomannan carrier protein LprG of Mycobacterium leprae (strain TN).